The primary structure comprises 708 residues: Fatty acid oxidation complex subunit alpha (708 aa).

The interval 1 to 191 (MDNNNAFQLS…KLGVVDACVP (191 aa)) is enoyl-CoA hydratase. Residues 311–708 (APVAAVGVLG…RAGLGEKFYP (398 aa)) form a 3-hydroxyacyl-CoA dehydrogenase region.

The protein in the N-terminal section; belongs to the enoyl-CoA hydratase/isomerase family. In the central section; belongs to the 3-hydroxyacyl-CoA dehydrogenase family. Heterotetramer of two alpha chains (FadJ) and two beta chains (FadI).

Its subcellular location is the cytoplasm. It carries out the reaction a (3S)-3-hydroxyacyl-CoA = a (2E)-enoyl-CoA + H2O. It catalyses the reaction a 4-saturated-(3S)-3-hydroxyacyl-CoA = a (3E)-enoyl-CoA + H2O. The enzyme catalyses a (3S)-3-hydroxyacyl-CoA + NAD(+) = a 3-oxoacyl-CoA + NADH + H(+). The catalysed reaction is (3S)-3-hydroxybutanoyl-CoA = (3R)-3-hydroxybutanoyl-CoA. The protein operates within lipid metabolism; fatty acid beta-oxidation. In terms of biological role, catalyzes the formation of a hydroxyacyl-CoA by addition of water on enoyl-CoA. Also exhibits 3-hydroxyacyl-CoA epimerase and 3-hydroxyacyl-CoA dehydrogenase activities. The polypeptide is Fatty acid oxidation complex subunit alpha (Vibrio cholerae serotype O1 (strain ATCC 39315 / El Tor Inaba N16961)).